A 296-amino-acid polypeptide reads, in one-letter code: Decaprenyl diphosphate synthase (296 aa).

The disordered stretch occupies residues 1-58 (MVRNERTLKSTDFPQLPPAPDDYPTFPDKSTWPVVFPMLPPSPDGGPRRPPQHTSKAV). Aspartate 76 is a catalytic residue. Aspartate 76 contacts Mg(2+). Substrate is bound by residues 77 to 80 (GNGR), tryptophan 81, arginine 89, histidine 93, and 121 to 123 (STE). Asparagine 124 acts as the Proton acceptor in catalysis. Residues tryptophan 125, arginine 127, arginine 244, and 250 to 252 (RSS) each bind substrate. Mg(2+) is bound at residue glutamate 263.

The protein belongs to the UPP synthase family. Homodimer. The cofactor is Mg(2+).

It localises to the cell membrane. The enzyme catalyses (2Z,6E)-farnesyl diphosphate + 7 isopentenyl diphosphate = (2Z,6Z,10Z,14Z,18Z,22Z,26Z,30Z,34E)-decaprenyl diphosphate + 7 diphosphate. The catalysed reaction is n isopentenyl diphosphate + (2E,6E)-farnesyl diphosphate = a di-trans,poly-cis-polyprenyl diphosphate + n diphosphate. Functionally, catalyzes the sequential condensation of isopentenyl diphosphate (IPP) in the cis configuration with (2Z,6E)-farnesyl diphosphate (Z-FPP or EZ-FPP) generating the 50 carbon product trans,polycis-decaprenyl diphosphate. When (2E,6E)-farnesyl diphosphate (E-FPP or EE-FPP) is used in vitro, both primary products decaprenyl diphosphate and (2E,6E,10E)-geranylgeranyl diphosphate (EEE-GGPP) are synthesized. M.tuberculosis does not synthesize (2E,6E,10Z)-geranylgeranyl diphosphate (EEZ-GGPP) and heptaprenyl diphosphate. Can also accept many different allylic substrates, including E-geranyl diphosphate (E-GPP), neryl diphosphate (NPP), and all-trans-geranyl-geranyl diphosphate. This Mycobacterium leprae (strain TN) protein is Decaprenyl diphosphate synthase (uppS).